A 1786-amino-acid chain; its full sequence is uncharacterized protein (1786 aa).

Disordered regions lie at residues 140–191 (QGLR…LPEA), 203–329 (RRES…RGGV), and 400–480 (GGSD…TPPE). Over residues 149-158 (SDMNSQTSLT) the composition is skewed to polar residues. Residues 232–247 (GHAPEAPAPGESPASS) are compositionally biased toward low complexity. The segment covering 248-259 (QCLPSQACENDF) has biased composition (polar residues). Over residues 306-329 (TSCRQHREEAGDRAGAGEDKRGGV) the composition is skewed to basic and acidic residues. The segment covering 422 to 438 (STTPSTNTTRTPSPISS) has biased composition (low complexity). A compositionally biased stretch (pro residues) spans 467-480 (VPPPTGPGTATPPE). Thr-721 is subject to Phosphothreonine. Disordered stretches follow at residues 746 to 907 (SESK…SDGH), 1081 to 1180 (VRDV…NSSP), 1218 to 1242 (ASAQRTPEKPKEEEAKEEGKAPKPA), 1291 to 1348 (KEGV…VSAR), 1362 to 1460 (SLYI…NSDC), and 1477 to 1550 (LLGR…EHTP). Composition is skewed to basic and acidic residues over residues 810-828 (MQREHEFKMERGEVTDTSH) and 845-861 (KPWERGLQRQSSRHSEA). Residues 1105–1115 (KGSGDSSDKGS) show a composition bias toward low complexity. Polar residues predominate over residues 1131-1140 (TPASGGSRSL). The span at 1153-1164 (PREEGVDREPRE) shows a compositional bias: basic and acidic residues. Polar residues predominate over residues 1167–1180 (SQVSNGGRLLNSSP). Ser-1179 bears the Phosphoserine mark. 2 stretches are compositionally biased toward basic and acidic residues: residues 1223 to 1238 (TPEKPKEEEAKEEGKA) and 1301 to 1319 (DPDKLAKQLGQVEERDTGH). Polar residues-rich tracts occupy residues 1336–1345 (RNSNPSTESV), 1389–1401 (NVFTVSSSSTQKT), and 1504–1521 (ARSQVPSNPKGSQVSGTS). The residue at position 1767 (Arg-1767) is an Omega-N-methylarginine.

This is an uncharacterized protein from Mus musculus (Mouse).